Reading from the N-terminus, the 390-residue chain is Putative gustatory receptor 59d (390 aa).

Over 1–38 the chain is Cytoplasmic; that stretch reads MADLLKLCLRIAYAYGRLTGVINFKIDLKTGQALVTRG. Residues 39–59 form a helical membrane-spanning segment; it reads ATLISVSTHLLIFALLLYQTM. Residues 60 to 75 are Extracellular-facing; that stretch reads RKSVVNVMWKYANSLH. A helical transmembrane segment spans residues 76–96; the sequence is EYVFLVIAGFRVVCVFLELVS. The Cytoplasmic segment spans residues 97–128; the sequence is RWSQRRTFVRLFNSFRRLYQRNPDIIQYCRRS. The helical transmembrane segment at 129 to 149 threads the bilayer; the sequence is IVSKFFCVTMTETLHIIVTLA. Topologically, residues 150–156 are extracellular; that stretch reads MMRNRLS. Residues 157 to 177 traverse the membrane as a helical segment; it reads IALALRIWAVLSLTAIINVII. Topologically, residues 178–252 are cytoplasmic; sequence TQYYVATACV…NLSTAYEGEV (75 aa). The chain crosses the membrane as a helical span at residues 253–273; it reads VCLVITYYLNMLGTSYLLFSI. Residues 274 to 283 are Extracellular-facing; the sequence is SKYGNFGNNL. Residues 284–304 traverse the membrane as a helical segment; that stretch reads LVIITLCGIVYFVFYVVDCWI. Residues 305–366 lie on the Cytoplasmic side of the membrane; sequence NAFNVFYLLD…MYGLFEFGRG (62 aa). A helical transmembrane segment spans residues 367 to 383; the sequence is TSFAVFNSLLTHSLLLI. The Extracellular portion of the chain corresponds to 384–390; the sequence is QYDVQNF.

It belongs to the insect chemoreceptor superfamily. Gustatory receptor (GR) family. Gr22e subfamily. Expressed in the adult labellar chemosensory neurons. In larvae, is expressed in neurons of the terminal external chemosensory organ as well as in the dorsal pharyngeal sense organ.

The protein resides in the cell membrane. In terms of biological role, probable gustatory receptor which mediates acceptance or avoidance behavior, depending on its substrates. The chain is Putative gustatory receptor 59d (Gr59d) from Drosophila melanogaster (Fruit fly).